A 118-amino-acid chain; its full sequence is Probable small nuclear ribonucleoprotein Sm D2 (118 aa).

Residues 29–115 (LSILTNSVKN…VILVVKNPLA (87 aa)) enclose the Sm domain.

This sequence belongs to the snRNP core protein family.

The protein resides in the nucleus. It localises to the cytoplasm. It is found in the cytosol. Functionally, plays a role in pre-mRNA splicing as a core component of the spliceosomal U1, U2, U4 and U5 small nuclear ribonucleoproteins (snRNPs), the building blocks of the spliceosome. This chain is Probable small nuclear ribonucleoprotein Sm D2 (snr-4), found in Caenorhabditis elegans.